We begin with the raw amino-acid sequence, 224 residues long: UPF0758 protein VSAL_I0192 (224 aa).

The MPN domain occupies 102–224 (ALTSPEHTKR…IVSFAERGWI (123 aa)). Positions 173, 175, and 186 each coordinate Zn(2+). Positions 173 to 186 (HNHPSGVAEPSQAD) match the JAMM motif motif.

This sequence belongs to the UPF0758 family.

The chain is UPF0758 protein VSAL_I0192 from Aliivibrio salmonicida (strain LFI1238) (Vibrio salmonicida (strain LFI1238)).